Here is a 245-residue protein sequence, read N- to C-terminus: MIIPALDLIEGQVVRLYQGDYGQVTEYKVDPAEQFNLYHQAGANWLHLVDLTGAKDTTARQLDLIAKLLASTPANIQIGGGVRTEQDVIDLLEAGAQRVVVGSTAVKQPELVKGWMEKYGAEKIVLALDINIDQDGTRKVAISGWQEDSGVTIEALINDYLTVGLQHVLCTDISRDGTLEGSNVELYVDLCKQYPQVQFQSSGGIGSLTDIEALKGSGVAGVIVGRALLDGKFTAEEAFACWQSE.

Asp-7 functions as the Proton acceptor in the catalytic mechanism. Catalysis depends on Asp-129, which acts as the Proton donor.

It belongs to the HisA/HisF family.

The protein localises to the cytoplasm. It catalyses the reaction 1-(5-phospho-beta-D-ribosyl)-5-[(5-phospho-beta-D-ribosylamino)methylideneamino]imidazole-4-carboxamide = 5-[(5-phospho-1-deoxy-D-ribulos-1-ylimino)methylamino]-1-(5-phospho-beta-D-ribosyl)imidazole-4-carboxamide. It participates in amino-acid biosynthesis; L-histidine biosynthesis; L-histidine from 5-phospho-alpha-D-ribose 1-diphosphate: step 4/9. This Vibrio vulnificus (strain CMCP6) protein is 1-(5-phosphoribosyl)-5-[(5-phosphoribosylamino)methylideneamino] imidazole-4-carboxamide isomerase.